We begin with the raw amino-acid sequence, 307 residues long: Elongation factor Ts (307 aa).

The interval 80-83 (TDFV) is involved in Mg(2+) ion dislocation from EF-Tu.

Belongs to the EF-Ts family.

It localises to the cytoplasm. In terms of biological role, associates with the EF-Tu.GDP complex and induces the exchange of GDP to GTP. It remains bound to the aminoacyl-tRNA.EF-Tu.GTP complex up to the GTP hydrolysis stage on the ribosome. This is Elongation factor Ts from Rhodospirillum centenum (strain ATCC 51521 / SW).